The chain runs to 95 residues: Small ribosomal subunit protein bS6 (95 aa).

This sequence belongs to the bacterial ribosomal protein bS6 family.

Functionally, binds together with bS18 to 16S ribosomal RNA. The polypeptide is Small ribosomal subunit protein bS6 (Clostridium perfringens (strain ATCC 13124 / DSM 756 / JCM 1290 / NCIMB 6125 / NCTC 8237 / Type A)).